Consider the following 358-residue polypeptide: Aromatic amino acid aminotransferase (358 aa).

Lys-214 is subject to N6-(pyridoxal phosphate)lysine.

The protein belongs to the class-II pyridoxal-phosphate-dependent aminotransferase family. In terms of assembly, homodimer. Pyridoxal 5'-phosphate is required as a cofactor.

The catalysed reaction is an aromatic L-alpha-amino acid + 2-oxoglutarate = an aromatic oxo-acid + L-glutamate. In terms of biological role, aminotransferase that catalyzes the conversion of aromatic amino acids and 2-oxoglutarate into corresponding aromatic oxo acids and L-glutamate. This is Aromatic amino acid aminotransferase from Rhodococcus jostii (strain RHA1).